We begin with the raw amino-acid sequence, 110 residues long: Disintegrin jerdostatin (110 aa).

An N-terminal signal peptide occupies residues 1–20 (MIQVLLVTICLAVFPYQVSS). The propeptide occupies 21–67 (KTLKSGSVNEYEVVNPGTVTGLPKGAVKQPEKKHEPMKGNTLQKLPL). Residues 27 to 110 (SVNEYEVVNP…CECPSYPGNG (84 aa)) form the Disintegrin domain. Intrachain disulfides connect cysteine 68/cysteine 77, cysteine 73/cysteine 96, cysteine 74/cysteine 101, and cysteine 86/cysteine 103. A Cell attachment site; atypical (RTS) motif is present at residues 88–90 (RTS).

It belongs to the disintegrin family. Short disintegrin subfamily. As to quaternary structure, monomer. In terms of processing, two conformers are found, they may differ by their disulfide bond connectivities. Conformer 2 is 33 times less active than conformer 1. Conformer 2 may represent a non-native protein. The C-terminal dipeptide may be post-translationally removed, as seen in disintegrins that possess a KTS integrin-binding motif. In terms of tissue distribution, expressed by the venom gland.

Its subcellular location is the secreted. In terms of biological role, recombinant protein inhibits the adhesion of alpha-1/beta-1-K562 (ITGA1/ITGB1) cells to collagen IV with an IC(50) of 80 nM. This Protobothrops jerdonii (Jerdon's pitviper) protein is Disintegrin jerdostatin.